A 162-amino-acid polypeptide reads, in one-letter code: MKRGVATLPVILVILLSVAAGAGAWLLVRGHGPQQPEISAYSHGHLTRVGPYLYCNVVDLDDCQTPQAQGELPVSERYPVQLSVPEVISRAPWRLLQVYQDPANTTSTLFRPDTRLAVTIPTVDPQRGRLTGIVVQLLTLVVDHSGELRDVPHAEWSVRLIF.

The signal sequence occupies residues 1 to 24; the sequence is MKRGVATLPVILVILLSVAAGAGA.

This is an uncharacterized protein from Mycobacterium bovis (strain ATCC BAA-935 / AF2122/97).